Consider the following 457-residue polypeptide: Histidine--tRNA ligase (457 aa).

This sequence belongs to the class-II aminoacyl-tRNA synthetase family. As to quaternary structure, homodimer.

It localises to the cytoplasm. The enzyme catalyses tRNA(His) + L-histidine + ATP = L-histidyl-tRNA(His) + AMP + diphosphate + H(+). The sequence is that of Histidine--tRNA ligase from Mesoplasma florum (strain ATCC 33453 / NBRC 100688 / NCTC 11704 / L1) (Acholeplasma florum).